The chain runs to 139 residues: Small integral membrane protein 34 (139 aa).

A helical membrane pass occupies residues 46 to 66 (GTSAAWYILTIIGIYAVIFVF).

Its subcellular location is the membrane. The sequence is that of Small integral membrane protein 34 from Homo sapiens (Human).